The chain runs to 78 residues: U-scoloptoxin(04)-Er1d (78 aa).

The N-terminal stretch at 1–24 (MTRHLIFAAMLLVCLFVCWNAVGA) is a signal peptide. The propeptide occupies 25 to 28 (RDAR).

This sequence belongs to the scoloptoxin-04 family. Contains 2 disulfide bonds. In terms of tissue distribution, expressed by the venom gland.

The protein localises to the secreted. The polypeptide is U-scoloptoxin(04)-Er1d (Ethmostigmus rubripes (Giant centipede)).